The following is a 360-amino-acid chain: Phospho-N-acetylmuramoyl-pentapeptide-transferase (360 aa).

Transmembrane regions (helical) follow at residues 27–47 (ILSV…MIRM), 73–93 (TMGG…WGDL), 97–117 (FVWI…VDDW), 132–152 (WKYL…FFTA), 164–184 (FFKS…YFVI), 199–219 (GLAI…AYAG), 236–256 (AGEL…FLWF), 263–283 (VFMG…MAVI), 288–308 (IVLF…MLQV), and 337–357 (KIIV…LATL).

Belongs to the glycosyltransferase 4 family. MraY subfamily. Mg(2+) is required as a cofactor.

The protein resides in the cell inner membrane. It catalyses the reaction UDP-N-acetyl-alpha-D-muramoyl-L-alanyl-gamma-D-glutamyl-meso-2,6-diaminopimeloyl-D-alanyl-D-alanine + di-trans,octa-cis-undecaprenyl phosphate = di-trans,octa-cis-undecaprenyl diphospho-N-acetyl-alpha-D-muramoyl-L-alanyl-D-glutamyl-meso-2,6-diaminopimeloyl-D-alanyl-D-alanine + UMP. Its pathway is cell wall biogenesis; peptidoglycan biosynthesis. In terms of biological role, catalyzes the initial step of the lipid cycle reactions in the biosynthesis of the cell wall peptidoglycan: transfers peptidoglycan precursor phospho-MurNAc-pentapeptide from UDP-MurNAc-pentapeptide onto the lipid carrier undecaprenyl phosphate, yielding undecaprenyl-pyrophosphoryl-MurNAc-pentapeptide, known as lipid I. This is Phospho-N-acetylmuramoyl-pentapeptide-transferase from Alcanivorax borkumensis (strain ATCC 700651 / DSM 11573 / NCIMB 13689 / SK2).